The chain runs to 99 residues: Aspartyl/glutamyl-tRNA(Asn/Gln) amidotransferase subunit C (99 aa).

Belongs to the GatC family. As to quaternary structure, heterotrimer of A, B and C subunits.

The catalysed reaction is L-glutamyl-tRNA(Gln) + L-glutamine + ATP + H2O = L-glutaminyl-tRNA(Gln) + L-glutamate + ADP + phosphate + H(+). It catalyses the reaction L-aspartyl-tRNA(Asn) + L-glutamine + ATP + H2O = L-asparaginyl-tRNA(Asn) + L-glutamate + ADP + phosphate + 2 H(+). Its function is as follows. Allows the formation of correctly charged Asn-tRNA(Asn) or Gln-tRNA(Gln) through the transamidation of misacylated Asp-tRNA(Asn) or Glu-tRNA(Gln) in organisms which lack either or both of asparaginyl-tRNA or glutaminyl-tRNA synthetases. The reaction takes place in the presence of glutamine and ATP through an activated phospho-Asp-tRNA(Asn) or phospho-Glu-tRNA(Gln). This Paracidovorax citrulli (strain AAC00-1) (Acidovorax citrulli) protein is Aspartyl/glutamyl-tRNA(Asn/Gln) amidotransferase subunit C.